The chain runs to 282 residues: uncharacterized protein (282 aa).

Transmembrane regions (helical) follow at residues 18–38 (PIVLLIPVPGSSVIHDLWAGT), 40–60 (LLVVFGISVLLTFYPGWVTIG), 87–107 (LWIVLAIGFLTAALAGGTPVV), 119–139 (ALHFLRITALSVVLLALGAMV), 164–184 (IPVDEWAVALALALRAFPMLI), and 260–280 (VTLAITAMASGTAVAIESLIL).

It belongs to the CbiQ family.

The protein localises to the cell membrane. This is an uncharacterized protein from Mycobacterium tuberculosis (strain CDC 1551 / Oshkosh).